Consider the following 1005-residue polypeptide: Probable histidine kinase 4 (1005 aa).

The Cytoplasmic portion of the chain corresponds to Met1–Lys37. The chain crosses the membrane as a helical span at residues Leu38–His58. At Trp59 to Ser333 the chain is on the extracellular side. A CHASE domain is found at His110 to Val321. A helical transmembrane segment spans residues Ala334 to Ala354. The Cytoplasmic portion of the chain corresponds to Ala355–Ser1005. The Histidine kinase domain occupies Thr389–Arg675. His392 carries the post-translational modification Phosphohistidine; by autocatalysis. 2 Response regulatory domains span residues Ser700–Leu829 and Asn862–Leu999. Asp912 is subject to 4-aspartylphosphate.

In terms of processing, activation probably requires a transfer of a phosphate group between a His in the transmitter domain and an Asp of the receiver domain. As to expression, highly expressed in young leaves and spikelets, and at lower levels in roots, mature leaves and stems.

It is found in the cell membrane. It carries out the reaction ATP + protein L-histidine = ADP + protein N-phospho-L-histidine.. Its function is as follows. Cytokinin receptor related to bacterial two-component regulators. Functions as a histidine kinase and transmits the stress signal to a downstream MAPK cascade. The sequence is that of Probable histidine kinase 4 from Oryza sativa subsp. japonica (Rice).